Here is a 208-residue protein sequence, read N- to C-terminus: Pyridoxine/pyridoxamine 5'-phosphate oxidase (208 aa).

FMN-binding positions include 55–60, 70–71, K76, K77, and Q99; these read RMVLLK and YT. Residue K60 participates in substrate binding. Residues Y117, R121, and S125 each contribute to the substrate site. Residues 134 to 135 and W179 contribute to the FMN site; that span reads QS. 185–187 is a binding site for substrate; the sequence is RLH. R189 is a binding site for FMN.

It belongs to the pyridoxamine 5'-phosphate oxidase family. In terms of assembly, homodimer. Requires FMN as cofactor.

The catalysed reaction is pyridoxamine 5'-phosphate + O2 + H2O = pyridoxal 5'-phosphate + H2O2 + NH4(+). The enzyme catalyses pyridoxine 5'-phosphate + O2 = pyridoxal 5'-phosphate + H2O2. Its pathway is cofactor metabolism; pyridoxal 5'-phosphate salvage; pyridoxal 5'-phosphate from pyridoxamine 5'-phosphate: step 1/1. It participates in cofactor metabolism; pyridoxal 5'-phosphate salvage; pyridoxal 5'-phosphate from pyridoxine 5'-phosphate: step 1/1. Catalyzes the oxidation of either pyridoxine 5'-phosphate (PNP) or pyridoxamine 5'-phosphate (PMP) into pyridoxal 5'-phosphate (PLP). This is Pyridoxine/pyridoxamine 5'-phosphate oxidase from Brucella ovis (strain ATCC 25840 / 63/290 / NCTC 10512).